Reading from the N-terminus, the 152-residue chain is Large ribosomal subunit protein bL9 (152 aa).

Residues 41–61 (QSAMSQLNAERKAEQRREAEE) form a disordered region. Residues 49–61 (AERKAEQRREAEE) are compositionally biased toward basic and acidic residues.

The protein belongs to the bacterial ribosomal protein bL9 family.

Binds to the 23S rRNA. This Levilactobacillus brevis (strain ATCC 367 / BCRC 12310 / CIP 105137 / JCM 1170 / LMG 11437 / NCIMB 947 / NCTC 947) (Lactobacillus brevis) protein is Large ribosomal subunit protein bL9.